The following is a 420-amino-acid chain: Serine hydroxymethyltransferase (420 aa).

Residues L121 and 125–127 each bind (6S)-5,6,7,8-tetrahydrofolate; that span reads GHL. K229 is subject to N6-(pyridoxal phosphate)lysine.

The protein belongs to the SHMT family. Homodimer. It depends on pyridoxal 5'-phosphate as a cofactor.

It localises to the cytoplasm. It carries out the reaction (6R)-5,10-methylene-5,6,7,8-tetrahydrofolate + glycine + H2O = (6S)-5,6,7,8-tetrahydrofolate + L-serine. The protein operates within one-carbon metabolism; tetrahydrofolate interconversion. It participates in amino-acid biosynthesis; glycine biosynthesis; glycine from L-serine: step 1/1. Functionally, catalyzes the reversible interconversion of serine and glycine with tetrahydrofolate (THF) serving as the one-carbon carrier. This reaction serves as the major source of one-carbon groups required for the biosynthesis of purines, thymidylate, methionine, and other important biomolecules. Also exhibits THF-independent aldolase activity toward beta-hydroxyamino acids, producing glycine and aldehydes, via a retro-aldol mechanism. The chain is Serine hydroxymethyltransferase from Wigglesworthia glossinidia brevipalpis.